The sequence spans 65 residues: Small ribosomal subunit protein bS21 (65 aa).

This sequence belongs to the bacterial ribosomal protein bS21 family.

This Acidobacterium capsulatum (strain ATCC 51196 / DSM 11244 / BCRC 80197 / JCM 7670 / NBRC 15755 / NCIMB 13165 / 161) protein is Small ribosomal subunit protein bS21.